A 100-amino-acid chain; its full sequence is NADH-quinone oxidoreductase subunit K (100 aa).

3 helical membrane-spanning segments follow: residues 4–24 (LSHG…SLVM), 28–48 (ILFM…ALVV), and 60–80 (IMYI…LALL).

The protein belongs to the complex I subunit 4L family. In terms of assembly, NDH-1 is composed of 13 different subunits. Subunits NuoA, H, J, K, L, M, N constitute the membrane sector of the complex.

The protein localises to the cell membrane. The catalysed reaction is a quinone + NADH + 5 H(+)(in) = a quinol + NAD(+) + 4 H(+)(out). In terms of biological role, NDH-1 shuttles electrons from NADH, via FMN and iron-sulfur (Fe-S) centers, to quinones in the respiratory chain. The immediate electron acceptor for the enzyme in this species is believed to be ubiquinone. Couples the redox reaction to proton translocation (for every two electrons transferred, four hydrogen ions are translocated across the cytoplasmic membrane), and thus conserves the redox energy in a proton gradient. This is NADH-quinone oxidoreductase subunit K from Buchnera aphidicola subsp. Baizongia pistaciae (strain Bp).